The sequence spans 131 residues: Insertion element iso-IS1n protein InsB (131 aa).

The protein belongs to the transposase 27 family.

Functionally, absolutely required for transposition of IS1. The protein is Insertion element iso-IS1n protein InsB (insB) of Shigella dysenteriae.